A 511-amino-acid chain; its full sequence is ATP synthase subunit alpha 1 (511 aa).

ATP is bound at residue 170 to 177; that stretch reads GDRQTGKT.

The protein belongs to the ATPase alpha/beta chains family. As to quaternary structure, F-type ATPases have 2 components, CF(1) - the catalytic core - and CF(0) - the membrane proton channel. CF(1) has five subunits: alpha(3), beta(3), gamma(1), delta(1), epsilon(1). CF(0) has three main subunits: a(1), b(2) and c(9-12). The alpha and beta chains form an alternating ring which encloses part of the gamma chain. CF(1) is attached to CF(0) by a central stalk formed by the gamma and epsilon chains, while a peripheral stalk is formed by the delta and b chains.

The protein resides in the cell inner membrane. The catalysed reaction is ATP + H2O + 4 H(+)(in) = ADP + phosphate + 5 H(+)(out). Functionally, produces ATP from ADP in the presence of a proton gradient across the membrane. The alpha chain is a regulatory subunit. This chain is ATP synthase subunit alpha 1, found in Gluconobacter oxydans (strain 621H) (Gluconobacter suboxydans).